The sequence spans 174 residues: MERKTVLYIAVSLDGMIAKEDGSIDWLDEFEGEGDNGYSDFYQTVDTVILGRSTYEHVKVLTPVFPYQDKTCYVFTGSPDSYQDEHVTFINEGARAFTARLKQEKGSNIWIAGGAELVNDFMKEDAIDEFIITVIPVVLGSGIPLFHELTNETKLRLKGTKQFGQAVQLHYVRA.

Residues Ala-126–Phe-146 traverse the membrane as a helical segment.

This sequence to B.subtilis YyaP.

The protein localises to the membrane. This is an uncharacterized protein from Bacillus subtilis (strain 168).